Reading from the N-terminus, the 662-residue chain is p-hydroxybenzoic acid efflux pump subunit AaeB (662 aa).

A run of 11 helical transmembrane segments spans residues 22–42 (FAFKLSFAIVLSLFLGFHLQL), 52–72 (AAIVAAGPAFAAGGEPFSGAI), 76–96 (GMLRIIGTFIGCIGALVIIIA), 102–122 (VVMLMLCCIWAGLCTWVSSLV), 129–149 (IFGLAGYTALIIIVSTQGTPL), 161–181 (EIVLGIVCAILADLLFSPRSI), 378–398 (LFWLSTGWTSGSVCMVMIAVV), 415–435 (FLFGTIYALPLGALMFMFIMP), 439–459 (QSMLLLCLSLGGMAFFLGLEV), 465–485 (GSLGALASTINILVLDNPMTF), and 491–511 (LDSAIGQIIGCFLALMVIMLI).

This sequence belongs to the aromatic acid exporter ArAE (TC 2.A.85) family.

Its subcellular location is the cell inner membrane. Its function is as follows. Forms an efflux pump with AaeA. Could function as a metabolic relief valve, allowing to eliminate certain compounds when they accumulate to high levels in the cell. The polypeptide is p-hydroxybenzoic acid efflux pump subunit AaeB (Pectobacterium atrosepticum (strain SCRI 1043 / ATCC BAA-672) (Erwinia carotovora subsp. atroseptica)).